Here is an 880-residue protein sequence, read N- to C-terminus: Tyrosine-protein kinase receptor TYRO3 (880 aa).

The first 30 residues, methionine 1–alanine 30, serve as a signal peptide directing secretion. Ig-like C2-type domains are found at residues alanine 31–serine 118 and proline 129–valine 209. At alanine 31–tryptophan 419 the chain is on the extracellular side. N-linked (GlcNAc...) asparagine glycosylation is found at asparagine 53, asparagine 75, asparagine 181, asparagine 220, asparagine 230, asparagine 283, asparagine 356, and asparagine 370. 2 disulfide bridges follow: cysteine 54–cysteine 107 and cysteine 150–cysteine 193. Fibronectin type-III domains are found at residues alanine 217–leucine 310 and alanine 315–histidine 406. A helical membrane pass occupies residues valine 420–leucine 440. Over leucine 441 to cysteine 880 the chain is Cytoplasmic. Serine 456 carries the phosphoserine modification. Residues phenylalanine 508–valine 785 form the Protein kinase domain. ATP contacts are provided by residues leucine 514–valine 522 and lysine 540. Aspartate 645 functions as the Proton acceptor in the catalytic mechanism. A phosphotyrosine; by autocatalysis mark is found at tyrosine 671, tyrosine 675, tyrosine 676, and tyrosine 794. Residues alanine 800–asparagine 864 are disordered. 2 positions are modified to phosphoserine: serine 808 and serine 859. The span at serine 849 to asparagine 864 shows a compositional bias: polar residues.

It belongs to the protein kinase superfamily. Tyr protein kinase family. AXL/UFO subfamily. As to quaternary structure, monomer and homodimer. Interacts (via N-terminus) with extracellular ligands TULP1 and GAS6. Interacts with PIK3R1; this interaction increases PI3-kinase activity. Autophosphorylated. As to expression, abundant in the brain and lower levels in other tissues.

It is found in the cell membrane. It catalyses the reaction L-tyrosyl-[protein] + ATP = O-phospho-L-tyrosyl-[protein] + ADP + H(+). Functionally, receptor tyrosine kinase that transduces signals from the extracellular matrix into the cytoplasm by binding to several ligands including TULP1 or GAS6. Regulates many physiological processes including cell survival, migration and differentiation. Ligand binding at the cell surface induces dimerization and autophosphorylation of TYRO3 on its intracellular domain that provides docking sites for downstream signaling molecules. Following activation by ligand, interacts with PIK3R1 and thereby enhances PI3-kinase activity. Activates the AKT survival pathway, including nuclear translocation of NF-kappa-B and up-regulation of transcription of NF-kappa-B-regulated genes. TYRO3 signaling plays a role in various processes such as neuron protection from excitotoxic injury, platelet aggregation and cytoskeleton reorganization. Also plays an important role in inhibition of Toll-like receptors (TLRs)-mediated innate immune response by activating STAT1, which selectively induces production of suppressors of cytokine signaling SOCS1 and SOCS3. The chain is Tyrosine-protein kinase receptor TYRO3 (Tyro3) from Mus musculus (Mouse).